A 199-amino-acid polypeptide reads, in one-letter code: Hematopoietic prostaglandin D synthase (199 aa).

Residues 2 to 79 enclose the GST N-terminal domain; the sequence is PNYKLTYFNM…YLTKNTDLAG (78 aa). Residues Tyr8, Arg14, Trp39, 49 to 51, and 63 to 64 each bind glutathione; these read GKI and QS. The region spanning 81 to 199 is the GST C-terminal domain; the sequence is TEMEQCHVDA…WIKRRPQTKL (119 aa).

Belongs to the GST superfamily. Sigma family. In terms of assembly, homodimer. Glutathione serves as cofactor. As to expression, expressed in a number of megakaryocytic cell lines but not in platelets. Highly expressed in adipose tissue, macrophages and placenta. Also expressed at lower levels in lung, heart, lymph nodes, appendix, bone marrow and fetal liver.

It is found in the cytoplasm. It catalyses the reaction prostaglandin H2 = prostaglandin D2. The enzyme catalyses RX + glutathione = an S-substituted glutathione + a halide anion + H(+). It carries out the reaction 2-glyceryl-prostaglandin H2 = 2-glyceryl-prostaglandin D2. With respect to regulation, prostaglandin PGD2 synthesis is stimulated by calcium and magnesium ions. One calcium or magnesium ion is bound between the subunits of the homodimer. The interactions with the protein are for the most part mediated via water molecules. Magnesium increases the affinity for glutathione, while calcium has no effect on the affinity for glutathione. Bifunctional enzyme which catalyzes both the conversion of PGH2 to PGD2, a prostaglandin involved in smooth muscle contraction/relaxation and a potent inhibitor of platelet aggregation, and the conjugation of glutathione with a wide range of aryl halides and organic isothiocyanates. Also exhibits low glutathione-peroxidase activity towards cumene hydroperoxide. The polypeptide is Hematopoietic prostaglandin D synthase (Homo sapiens (Human)).